Here is a 399-residue protein sequence, read N- to C-terminus: Nicotinate phosphoribosyltransferase (399 aa).

The residue at position 217 (H217) is a Phosphohistidine; by autocatalysis.

This sequence belongs to the NAPRTase family. Transiently phosphorylated on a His residue during the reaction cycle. Phosphorylation strongly increases the affinity for substrates and increases the rate of nicotinate D-ribonucleotide production. Dephosphorylation regenerates the low-affinity form of the enzyme, leading to product release.

It catalyses the reaction nicotinate + 5-phospho-alpha-D-ribose 1-diphosphate + ATP + H2O = nicotinate beta-D-ribonucleotide + ADP + phosphate + diphosphate. It functions in the pathway cofactor biosynthesis; NAD(+) biosynthesis; nicotinate D-ribonucleotide from nicotinate: step 1/1. Its function is as follows. Catalyzes the synthesis of beta-nicotinate D-ribonucleotide from nicotinate and 5-phospho-D-ribose 1-phosphate at the expense of ATP. The polypeptide is Nicotinate phosphoribosyltransferase (Burkholderia orbicola (strain MC0-3)).